The following is a 211-amino-acid chain: ATP-dependent dethiobiotin synthetase BioD (211 aa).

10–15 (GIGKTY) is a binding site for ATP. Mg(2+) is bound at residue Thr-14. Lys-35 is a catalytic residue. Ser-39 provides a ligand contact to substrate. Residues Asp-44, 105–108 (EGAG), and 165–166 (NC) each bind ATP. The Mg(2+) site is built by Asp-44 and Glu-105.

Belongs to the dethiobiotin synthetase family. In terms of assembly, homodimer. Requires Mg(2+) as cofactor.

The protein localises to the cytoplasm. It catalyses the reaction (7R,8S)-7,8-diammoniononanoate + CO2 + ATP = (4R,5S)-dethiobiotin + ADP + phosphate + 3 H(+). The protein operates within cofactor biosynthesis; biotin biosynthesis; biotin from 7,8-diaminononanoate: step 1/2. In terms of biological role, catalyzes a mechanistically unusual reaction, the ATP-dependent insertion of CO2 between the N7 and N8 nitrogen atoms of 7,8-diaminopelargonic acid (DAPA, also called 7,8-diammoniononanoate) to form a ureido ring. The chain is ATP-dependent dethiobiotin synthetase BioD from Methanococcus vannielii (strain ATCC 35089 / DSM 1224 / JCM 13029 / OCM 148 / SB).